The following is a 355-amino-acid chain: Alanine racemase (355 aa).

Residue lysine 34 is the Proton acceptor; specific for D-alanine of the active site. Lysine 34 bears the N6-(pyridoxal phosphate)lysine mark. Arginine 133 contacts substrate. The Proton acceptor; specific for L-alanine role is filled by tyrosine 249. Methionine 297 contributes to the substrate binding site.

It belongs to the alanine racemase family. It depends on pyridoxal 5'-phosphate as a cofactor.

The enzyme catalyses L-alanine = D-alanine. Its pathway is amino-acid biosynthesis; D-alanine biosynthesis; D-alanine from L-alanine: step 1/1. Catalyzes the interconversion of L-alanine and D-alanine. May also act on other amino acids. The chain is Alanine racemase (alr) from Rickettsia peacockii (strain Rustic).